The following is a 631-amino-acid chain: Glutamyl-tRNA(Gln) amidotransferase subunit E (631 aa).

This sequence belongs to the GatB/GatE family. GatE subfamily. In terms of assembly, heterodimer of GatD and GatE.

It catalyses the reaction L-glutamyl-tRNA(Gln) + L-glutamine + ATP + H2O = L-glutaminyl-tRNA(Gln) + L-glutamate + ADP + phosphate + H(+). In terms of biological role, allows the formation of correctly charged Gln-tRNA(Gln) through the transamidation of misacylated Glu-tRNA(Gln) in organisms which lack glutaminyl-tRNA synthetase. The reaction takes place in the presence of glutamine and ATP through an activated gamma-phospho-Glu-tRNA(Gln). The GatDE system is specific for glutamate and does not act on aspartate. The polypeptide is Glutamyl-tRNA(Gln) amidotransferase subunit E (Methanococcus maripaludis (strain C5 / ATCC BAA-1333)).